A 365-amino-acid polypeptide reads, in one-letter code: DNA replication and repair protein RecF (365 aa).

Position 30 to 37 (30 to 37) interacts with ATP; it reads GNNGMGKT.

This sequence belongs to the RecF family.

It localises to the cytoplasm. In terms of biological role, the RecF protein is involved in DNA metabolism; it is required for DNA replication and normal SOS inducibility. RecF binds preferentially to single-stranded, linear DNA. It also seems to bind ATP. The sequence is that of DNA replication and repair protein RecF from Parabacteroides distasonis (strain ATCC 8503 / DSM 20701 / CIP 104284 / JCM 5825 / NCTC 11152).